The sequence spans 93 residues: Protein salt-induced and EIN3/EIL1-dependent 1 (93 aa).

Residues 23–36 are compositionally biased toward low complexity; it reads SSLLTESSSSSLCS. Residues 23 to 46 form a disordered region; that stretch reads SSLLTESSSSSLCSEEAEGGGGEA.

With respect to regulation, triggered by EIN3. In terms of biological role, involved in ethylene-dependent salt stress responses by reducing reactive oxygen species (ROS) accumulation. The polypeptide is Protein salt-induced and EIN3/EIL1-dependent 1 (Arabidopsis thaliana (Mouse-ear cress)).